The sequence spans 278 residues: UPF0761 membrane protein NT05HA_1801 (278 aa).

A run of 6 helical transmembrane segments spans residues 32-52, 88-108, 123-143, 168-188, 203-223, and 232-252; these read MLAI…FPVF, QMSA…INSI, PIFT…LLVG, LLSF…YMVV, LIAA…IVTF, and AMAT…FVLL.

It belongs to the UPF0761 family.

It is found in the cell inner membrane. In Aggregatibacter aphrophilus (strain NJ8700) (Haemophilus aphrophilus), this protein is UPF0761 membrane protein NT05HA_1801.